Reading from the N-terminus, the 100-residue chain is Putative insulin-like peptide beta-type 6 (100 aa).

A signal peptide spans 1–18 (MHSIVALMLIGTILPIAA). Intrachain disulfides connect Cys54-Cys83, Cys66-Cys96, Cys70-Cys97, and Cys82-Cys87.

This sequence belongs to the insulin family.

The protein resides in the secreted. This chain is Putative insulin-like peptide beta-type 6 (ins-5), found in Caenorhabditis elegans.